We begin with the raw amino-acid sequence, 60 residues long: UPF0434 protein PM0859 (60 aa).

Belongs to the UPF0434 family.

The protein is UPF0434 protein PM0859 of Pasteurella multocida (strain Pm70).